Reading from the N-terminus, the 70-residue chain is MNFNLRGAVLANIAGNTQDQLQETIVDAIQSGEEKMLPGLGVLFEVIWKNADENERHDMLETLEQGLKNK.

The protein belongs to the SspI family.

It is found in the spore core. In Bacillus cytotoxicus (strain DSM 22905 / CIP 110041 / 391-98 / NVH 391-98), this protein is Small, acid-soluble spore protein I.